The sequence spans 83 residues: Acid shock protein (83 aa).

The first 21 residues, 1–21 (MKKVLALVVAAAMGLSSAAFA), serve as a signal peptide directing secretion. Positions 22–40 (AETATPAKTATPAKTTQNT) are enriched in low complexity. Positions 22 to 56 (AETATPAKTATPAKTTQNTQHHKKQHKKTVEQKAQ) are excised as a propeptide. The segment at 22–83 (AETATPAKTA…TSKTTSQPAA (62 aa)) is disordered. A compositionally biased stretch (basic residues) spans 57-70 (AAKKHQKKDGKKAP). Residues 71–83 (AKSTSKTTSQPAA) are compositionally biased toward low complexity.

Belongs to the Asr family. In terms of processing, proteolytic processing gives rise to the active protein.

Its subcellular location is the periplasm. In terms of biological role, required for growth and/or survival at acidic conditions. The sequence is that of Acid shock protein from Salmonella heidelberg (strain SL476).